Reading from the N-terminus, the 276-residue chain is 2,3,4,5-tetrahydropyridine-2,6-dicarboxylate N-succinyltransferase (276 aa).

Residues arginine 104 and aspartate 141 each coordinate substrate.

The protein belongs to the transferase hexapeptide repeat family. As to quaternary structure, homotrimer.

It is found in the cytoplasm. The enzyme catalyses (S)-2,3,4,5-tetrahydrodipicolinate + succinyl-CoA + H2O = (S)-2-succinylamino-6-oxoheptanedioate + CoA. It participates in amino-acid biosynthesis; L-lysine biosynthesis via DAP pathway; LL-2,6-diaminopimelate from (S)-tetrahydrodipicolinate (succinylase route): step 1/3. This is 2,3,4,5-tetrahydropyridine-2,6-dicarboxylate N-succinyltransferase from Legionella pneumophila (strain Paris).